A 588-amino-acid polypeptide reads, in one-letter code: Adenine deaminase (588 aa).

This sequence belongs to the metallo-dependent hydrolases superfamily. Adenine deaminase family. In terms of assembly, homodimer. It depends on Mn(2+) as a cofactor.

The enzyme catalyses adenine + H2O + H(+) = hypoxanthine + NH4(+). The chain is Adenine deaminase from Shigella flexneri serotype 5b (strain 8401).